A 102-amino-acid polypeptide reads, in one-letter code: Large ribosomal subunit protein uL23c (102 aa).

The protein belongs to the universal ribosomal protein uL23 family. As to quaternary structure, part of the 50S ribosomal subunit.

It is found in the plastid. It localises to the chloroplast. Binds to 23S rRNA. This is Large ribosomal subunit protein uL23c (rpl23) from Phaeodactylum tricornutum (strain CCAP 1055/1).